Consider the following 241-residue polypeptide: Ribonuclease PH (241 aa).

Residues arginine 90 and 128-130 (GTR) each bind phosphate.

It belongs to the RNase PH family. Homohexameric ring arranged as a trimer of dimers.

The catalysed reaction is tRNA(n+1) + phosphate = tRNA(n) + a ribonucleoside 5'-diphosphate. In terms of biological role, phosphorolytic 3'-5' exoribonuclease that plays an important role in tRNA 3'-end maturation. Removes nucleotide residues following the 3'-CCA terminus of tRNAs; can also add nucleotides to the ends of RNA molecules by using nucleoside diphosphates as substrates, but this may not be physiologically important. Probably plays a role in initiation of 16S rRNA degradation (leading to ribosome degradation) during starvation. The sequence is that of Ribonuclease PH from Corynebacterium diphtheriae (strain ATCC 700971 / NCTC 13129 / Biotype gravis).